The primary structure comprises 89 residues: Small ribosomal subunit protein uS17 (89 aa).

It belongs to the universal ribosomal protein uS17 family. Part of the 30S ribosomal subunit.

One of the primary rRNA binding proteins, it binds specifically to the 5'-end of 16S ribosomal RNA. This is Small ribosomal subunit protein uS17 from Azoarcus sp. (strain BH72).